The primary structure comprises 353 residues: Protein disulfide isomerase CRELD2 (353 aa).

The signal sequence occupies residues 1 to 24 (MRLPRRAALGLLPLLLLLPPAPEA). A CXXC motif is present at residues 31-34 (CHRC). Cystine bridges form between C31/C34, C140/C154, C148/C166, and C168/C177. Residues 136-178 (DCLACQGGSQRPCSGNGHCSGDGSRQGDGSCRCHMGYQGPLCT) enclose the EGF-like 1 domain. The FU 1 repeat unit spans residues 193 to 240 (HSICTACDESCKTCSGLTNRDCGECEVGWVLDEGACVDVDECAAEPPP). Residue N251 is glycosylated (N-linked (GlcNAc...) asparagine). The stretch at 253–302 (SYTCEECDSSCVGCTGEGPGNCKECISGYAREHGQCADVDECSLAEKTCV) is one FU 2 repeat. The CXXC signature appears at 263–266 (CVGC). 4 disulfide bridges follow: C263/C266, C294/C308, C301/C317, and C319/C330. Positions 290–331 (DVDECSLAEKTCVRKNENCYNTPGSYVCVCPDGFEETEDACV) constitute an EGF-like 2; calcium-binding domain. The tract at residues 332-353 (PPAEAEATEGESPTQLPSREDL) is disordered. Residues 342 to 353 (ESPTQLPSREDL) show a composition bias toward polar residues.

It belongs to the CRELD family. As to quaternary structure, interacts with CHRNA4. Component of a complex containing at least CRELD2, MANF, MATN3 and PDIA4. As to expression, ubiquitously expressed. Highly expressed in skeletal muscle, heart, liver, kidney and placenta.

It is found in the endoplasmic reticulum. It catalyses the reaction Catalyzes the rearrangement of -S-S- bonds in proteins.. Its function is as follows. Protein disulfide isomerase. Might play a role in the unfolded protein response. May regulate transport of alpha4-beta2 neuronal acetylcholine receptor. The sequence is that of Protein disulfide isomerase CRELD2 (CRELD2) from Homo sapiens (Human).